The following is a 377-amino-acid chain: Chaperone protein DnaJ (377 aa).

One can recognise a J domain in the interval 5–69; it reads EYYDRLGLSK…QKRAAYDQYG (65 aa). A CR-type zinc finger spans residues 133 to 215; the sequence is GAEKEIHYNR…CHGTGREKQS (83 aa). Residues Cys-146, Cys-149, Cys-163, Cys-166, Cys-189, Cys-192, Cys-203, and Cys-206 each coordinate Zn(2+). CXXCXGXG motif repeat units follow at residues 146-153, 163-170, 189-196, and 203-210; these read CKTCSGSG, CGRCHGHG, CDVCHGTG, and CQTCHGTG.

Belongs to the DnaJ family. As to quaternary structure, homodimer. It depends on Zn(2+) as a cofactor.

It localises to the cytoplasm. Its function is as follows. Participates actively in the response to hyperosmotic and heat shock by preventing the aggregation of stress-denatured proteins and by disaggregating proteins, also in an autonomous, DnaK-independent fashion. Unfolded proteins bind initially to DnaJ; upon interaction with the DnaJ-bound protein, DnaK hydrolyzes its bound ATP, resulting in the formation of a stable complex. GrpE releases ADP from DnaK; ATP binding to DnaK triggers the release of the substrate protein, thus completing the reaction cycle. Several rounds of ATP-dependent interactions between DnaJ, DnaK and GrpE are required for fully efficient folding. Also involved, together with DnaK and GrpE, in the DNA replication of plasmids through activation of initiation proteins. In Streptococcus thermophilus (strain CNRZ 1066), this protein is Chaperone protein DnaJ.